Reading from the N-terminus, the 699-residue chain is Elongation factor G (699 aa).

The region spanning 8 to 290 (NRYRNIGICA…AVIEFLPAPD (283 aa)) is the tr-type G domain. Residues 17–24 (AHVDAGKT), 88–92 (DTPGH), and 142–145 (NKMD) contribute to the GTP site.

The protein belongs to the TRAFAC class translation factor GTPase superfamily. Classic translation factor GTPase family. EF-G/EF-2 subfamily.

Its subcellular location is the cytoplasm. Catalyzes the GTP-dependent ribosomal translocation step during translation elongation. During this step, the ribosome changes from the pre-translocational (PRE) to the post-translocational (POST) state as the newly formed A-site-bound peptidyl-tRNA and P-site-bound deacylated tRNA move to the P and E sites, respectively. Catalyzes the coordinated movement of the two tRNA molecules, the mRNA and conformational changes in the ribosome. The sequence is that of Elongation factor G from Alcanivorax borkumensis (strain ATCC 700651 / DSM 11573 / NCIMB 13689 / SK2).